A 551-amino-acid chain; its full sequence is Scaffold protein OPG125 (551 aa).

Belongs to the orthopoxvirus protein OPG125 family. In terms of assembly, homotrimer. Self-assembles to form a layer. Interacts with OPG158 (via N-terminus); this interaction is necessary for OPG125 association with membranes.

Its subcellular location is the membrane. Its function is as follows. Scaffold protein which forms a transitory spherical honeycomb lattice providing curvature and rigidity to the convex membrane of crescent and immature virions (IV). This association occurs concomitantly with viral membrane formation. Targeted by the drug rifampicin, which prevents the formation of this lattice, and hence virus morphogenesis. In the presence of rifampicin, irregularly shaped membranes that lack the honeycomb layer accumulate around areas of electron-dense viroplasm. This layer is lost from virions during maturation from IV to mature virion (MV), through the proteolysis of OPG158 N-terminus. The chain is Scaffold protein OPG125 (OPG125) from Homo sapiens (Human).